Consider the following 159-residue polypeptide: Transcription elongation factor GreA (159 aa).

It belongs to the GreA/GreB family.

Its function is as follows. Necessary for efficient RNA polymerase transcription elongation past template-encoded arresting sites. The arresting sites in DNA have the property of trapping a certain fraction of elongating RNA polymerases that pass through, resulting in locked ternary complexes. Cleavage of the nascent transcript by cleavage factors such as GreA or GreB allows the resumption of elongation from the new 3'terminus. GreA releases sequences of 2 to 3 nucleotides. The chain is Transcription elongation factor GreA from Buchnera aphidicola subsp. Cinara cedri (strain Cc).